We begin with the raw amino-acid sequence, 320 residues long: Cytochrome f (320 aa).

The N-terminal stretch at methionine 1–alanine 35 is a signal peptide. Heme contacts are provided by tyrosine 36, cysteine 56, cysteine 59, and histidine 60. Residues valine 286–lysine 306 traverse the membrane as a helical segment.

The protein belongs to the cytochrome f family. As to quaternary structure, the 4 large subunits of the cytochrome b6-f complex are cytochrome b6, subunit IV (17 kDa polypeptide, petD), cytochrome f and the Rieske protein, while the 4 small subunits are PetG, PetL, PetM and PetN. The complex functions as a dimer. Requires heme as cofactor.

The protein localises to the plastid. Its subcellular location is the chloroplast thylakoid membrane. Functionally, component of the cytochrome b6-f complex, which mediates electron transfer between photosystem II (PSII) and photosystem I (PSI), cyclic electron flow around PSI, and state transitions. This Jasminum nudiflorum (Winter jasmine) protein is Cytochrome f.